Consider the following 235-residue polypeptide: Leucyl/phenylalanyl-tRNA--protein transferase (235 aa).

This sequence belongs to the L/F-transferase family.

Its subcellular location is the cytoplasm. The catalysed reaction is N-terminal L-lysyl-[protein] + L-leucyl-tRNA(Leu) = N-terminal L-leucyl-L-lysyl-[protein] + tRNA(Leu) + H(+). The enzyme catalyses N-terminal L-arginyl-[protein] + L-leucyl-tRNA(Leu) = N-terminal L-leucyl-L-arginyl-[protein] + tRNA(Leu) + H(+). It carries out the reaction L-phenylalanyl-tRNA(Phe) + an N-terminal L-alpha-aminoacyl-[protein] = an N-terminal L-phenylalanyl-L-alpha-aminoacyl-[protein] + tRNA(Phe). Its function is as follows. Functions in the N-end rule pathway of protein degradation where it conjugates Leu, Phe and, less efficiently, Met from aminoacyl-tRNAs to the N-termini of proteins containing an N-terminal arginine or lysine. The chain is Leucyl/phenylalanyl-tRNA--protein transferase from Magnetococcus marinus (strain ATCC BAA-1437 / JCM 17883 / MC-1).